We begin with the raw amino-acid sequence, 85 residues long: Small ribosomal subunit protein bS20 (85 aa).

Positions 1–24 (MANIKSAIKRAKLSEERRSHNASI) are disordered.

Belongs to the bacterial ribosomal protein bS20 family.

In terms of biological role, binds directly to 16S ribosomal RNA. This chain is Small ribosomal subunit protein bS20, found in Bacillus mycoides (strain KBAB4) (Bacillus weihenstephanensis).